The following is a 119-amino-acid chain: Protein FAM24A-like (119 aa).

Positions 1 to 40 (MYKPFDLRTIITIIIGCGILTAMFLLIGLVLCLYSKISKA) are cleaved as a signal peptide.

This sequence belongs to the FAM24 family.

The protein resides in the secreted. The protein is Protein FAM24A-like of Mus musculus (Mouse).